Here is a 153-residue protein sequence, read N- to C-terminus: uncharacterized protein (153 aa).

This is an uncharacterized protein from Escherichia coli (strain K12).